A 303-amino-acid polypeptide reads, in one-letter code: Proteasome subunit beta (303 aa).

Residues 1 to 67 (MTWQFPDRLS…SGGTGQLPHG (67 aa)) constitute a propeptide, removed in mature form; by autocatalysis. Threonine 68 functions as the Nucleophile in the catalytic mechanism.

Belongs to the peptidase T1B family. In terms of assembly, the 20S proteasome core is composed of 14 alpha and 14 beta subunits that assemble into four stacked heptameric rings, resulting in a barrel-shaped structure. The two inner rings, each composed of seven catalytic beta subunits, are sandwiched by two outer rings, each composed of seven alpha subunits. The catalytic chamber with the active sites is on the inside of the barrel. Has a gated structure, the ends of the cylinder being occluded by the N-termini of the alpha-subunits. Is capped by the proteasome-associated ATPase, ARC.

The protein localises to the cytoplasm. It carries out the reaction Cleavage of peptide bonds with very broad specificity.. The protein operates within protein degradation; proteasomal Pup-dependent pathway. With respect to regulation, the formation of the proteasomal ATPase ARC-20S proteasome complex, likely via the docking of the C-termini of ARC into the intersubunit pockets in the alpha-rings, may trigger opening of the gate for substrate entry. Interconversion between the open-gate and close-gate conformations leads to a dynamic regulation of the 20S proteasome proteolysis activity. Functionally, component of the proteasome core, a large protease complex with broad specificity involved in protein degradation. The polypeptide is Proteasome subunit beta (Mycolicibacterium paratuberculosis (strain ATCC BAA-968 / K-10) (Mycobacterium paratuberculosis)).